The following is a 362-amino-acid chain: MWTLVPVTFALRLLSTFVQPLGSLGSSLGPLFLWLWAAFWRAGGDRSRQQLQGKTEAGEPPRAQEDSHLPTTPTSVNYHFTRQCNYKCGFCFHTAKTSFVLPLEEAKRGLWLLKEAGMEKINFSGGEPFIHDRGEYLGKLVRFCKEELQLPSVSIVSNGSLIWERWFKSYGEYLDILAISCDSFDEQVNVLIGRGQGKKNHVENLQKLRTWCRDYKVAFKINSVINRFNVEEDMTEHIKALNPVRWKVFQCLLIEGENVGEDALREAEQFVISDEEFEEFLDRHKDVSCLVPESNRQMRDSYLILDEYMRFLNCRNGRKDPSKSILDVGVEKAIKFSGFDEKMFLKRGGKYVWSKADLKLDW.

The tract at residues 49–71 (QQLQGKTEAGEPPRAQEDSHLPT) is disordered. Over residues 56–68 (EAGEPPRAQEDSH) the composition is skewed to basic and acidic residues. Positions 70 to 290 (PTTPTSVNYH…LDRHKDVSCL (221 aa)) constitute a Radical SAM core domain. [4Fe-4S] cluster-binding residues include Cys84, Cys88, and Cys91. Lys198 carries the post-translational modification N6-acetyllysine. Residue Lys207 forms a Glycyl lysine isopeptide (Lys-Gly) (interchain with G-Cter in ubiquitin) linkage.

This sequence belongs to the radical SAM superfamily. RSAD2 family. In terms of assembly, homodimer. Interacts with IRAK1 and TRAF6. Interacts with FPPS. Interacts with HADHB. Interacts (via C-terminus) with VAPA/VAP33 (via C-terminus). [4Fe-4S] cluster is required as a cofactor. Acetylated by HAT1. HAT1-mediated acetylation of Lys-198 in turn recruits UBE4A that stimulates RSAD2 polyubiquitination leading to proteasomal degradation. Post-translationally, 'Lys-6'-linked polyubiquitination at Lys-207 leads to RSAD2 protein degradation.

It localises to the endoplasmic reticulum membrane. Its subcellular location is the golgi apparatus. It is found in the endoplasmic reticulum. The protein resides in the lipid droplet. The protein localises to the mitochondrion. It localises to the mitochondrion inner membrane. Its subcellular location is the mitochondrion outer membrane. The enzyme catalyses CTP + AH2 + S-adenosyl-L-methionine = 3'-deoxy-3',4'-didehydro-CTP + 5'-deoxyadenosine + L-methionine + A + H2O + H(+). IRAK1 and TRAF6 synergistically activate RSAD2 increasing its activity with CTP as substrate about 10-fold. In terms of biological role, interferon-inducible antiviral protein which plays a major role in the cell antiviral state induced by type I and type II interferon. Catalyzes the conversion of cytidine triphosphate (CTP) to 3'-deoxy-3',4'-didehydro-CTP (ddhCTP) via a SAM-dependent radical mechanism. In turn, ddhCTP acts as a chain terminator for the RNA-dependent RNA polymerases from multiple viruses and directly inhibits viral replication. Therefore, inhibits a wide range of DNA and RNA viruses. Also promotes TLR7 and TLR9-dependent production of IFN-beta production in plasmacytoid dendritic cells (pDCs) by facilitating 'Lys-63'-linked ubiquitination of IRAK1 by TRAF6. Plays a role in CD4+ T-cells activation and differentiation. Facilitates T-cell receptor (TCR)-mediated GATA3 activation and optimal T-helper 2 (Th2) cytokine production by modulating NFKB1 and JUNB activities. Can inhibit secretion of soluble proteins. This Sus scrofa (Pig) protein is S-adenosylmethionine-dependent nucleotide dehydratase RSAD2.